A 362-amino-acid chain; its full sequence is Zinc phosphodiesterase ELAC protein 1 (362 aa).

7 residues coordinate Zn(2+): histidine 62, histidine 64, aspartate 66, histidine 67, histidine 181, aspartate 252, and histidine 312. The active-site Proton acceptor is aspartate 66.

It belongs to the RNase Z family. In terms of assembly, homodimer. Requires Zn(2+) as cofactor.

Its subcellular location is the cytoplasm. The protein resides in the cytosol. It localises to the nucleus. The catalysed reaction is Endonucleolytic cleavage of RNA, removing extra 3' nucleotides from tRNA precursor, generating 3' termini of tRNAs. A 3'-hydroxy group is left at the tRNA terminus and a 5'-phosphoryl group is left at the trailer molecule.. In terms of biological role, zinc phosphodiesterase, which displays some tRNA 3'-processing endonuclease activity. Specifically involved in tRNA repair: acts downstream of the ribosome-associated quality control (RQC) pathway by removing a 2',3'-cyclic phosphate from tRNAs following cleavage by ANKZF1. tRNAs are then processed by TRNT1. This chain is Zinc phosphodiesterase ELAC protein 1 (Elac1), found in Mus musculus (Mouse).